A 445-amino-acid chain; its full sequence is tRNA-2-methylthio-N(6)-dimethylallyladenosine synthase (445 aa).

Positions 7–121 (KHFYIKSFGC…LPELIEKAAS (115 aa)) constitute an MTTase N-terminal domain. Positions 16, 52, 84, 156, 160, and 163 each coordinate [4Fe-4S] cluster. Residues 142-374 (RQVGASAFLT…QALLNQQQFD (233 aa)) enclose the Radical SAM core domain. One can recognise a TRAM domain in the interval 377–438 (QQTIGRKATV…PNSVKGQFLD (62 aa)).

Belongs to the methylthiotransferase family. MiaB subfamily. As to quaternary structure, monomer. The cofactor is [4Fe-4S] cluster.

It is found in the cytoplasm. It carries out the reaction N(6)-dimethylallyladenosine(37) in tRNA + (sulfur carrier)-SH + AH2 + 2 S-adenosyl-L-methionine = 2-methylsulfanyl-N(6)-dimethylallyladenosine(37) in tRNA + (sulfur carrier)-H + 5'-deoxyadenosine + L-methionine + A + S-adenosyl-L-homocysteine + 2 H(+). Catalyzes the methylthiolation of N6-(dimethylallyl)adenosine (i(6)A), leading to the formation of 2-methylthio-N6-(dimethylallyl)adenosine (ms(2)i(6)A) at position 37 in tRNAs that read codons beginning with uridine. The chain is tRNA-2-methylthio-N(6)-dimethylallyladenosine synthase from Zymomonas mobilis subsp. mobilis (strain ATCC 31821 / ZM4 / CP4).